Reading from the N-terminus, the 242-residue chain is Ubiquinone biosynthesis O-methyltransferase (242 aa).

Arginine 44, glycine 64, aspartate 85, and methionine 129 together coordinate S-adenosyl-L-methionine.

The protein belongs to the methyltransferase superfamily. UbiG/COQ3 family.

The enzyme catalyses a 3-demethylubiquinol + S-adenosyl-L-methionine = a ubiquinol + S-adenosyl-L-homocysteine + H(+). It carries out the reaction a 3-(all-trans-polyprenyl)benzene-1,2-diol + S-adenosyl-L-methionine = a 2-methoxy-6-(all-trans-polyprenyl)phenol + S-adenosyl-L-homocysteine + H(+). It functions in the pathway cofactor biosynthesis; ubiquinone biosynthesis. In terms of biological role, O-methyltransferase that catalyzes the 2 O-methylation steps in the ubiquinone biosynthetic pathway. The polypeptide is Ubiquinone biosynthesis O-methyltransferase (Klebsiella pneumoniae subsp. pneumoniae (strain ATCC 700721 / MGH 78578)).